We begin with the raw amino-acid sequence, 277 residues long: 4-hydroxy-tetrahydrodipicolinate reductase (277 aa).

Residues 10–15 (GAGGRM) and Glu-36 contribute to the NAD(+) site. Residue Arg-37 coordinates NADP(+). Residues 100–102 (GTT) and 124–127 (SGNM) each bind NAD(+). His-158 (proton donor/acceptor) is an active-site residue. His-159 contributes to the (S)-2,3,4,5-tetrahydrodipicolinate binding site. Lys-162 (proton donor) is an active-site residue. 168–169 (GT) serves as a coordination point for (S)-2,3,4,5-tetrahydrodipicolinate.

It belongs to the DapB family.

The protein resides in the cytoplasm. The enzyme catalyses (S)-2,3,4,5-tetrahydrodipicolinate + NAD(+) + H2O = (2S,4S)-4-hydroxy-2,3,4,5-tetrahydrodipicolinate + NADH + H(+). It catalyses the reaction (S)-2,3,4,5-tetrahydrodipicolinate + NADP(+) + H2O = (2S,4S)-4-hydroxy-2,3,4,5-tetrahydrodipicolinate + NADPH + H(+). It participates in amino-acid biosynthesis; L-lysine biosynthesis via DAP pathway; (S)-tetrahydrodipicolinate from L-aspartate: step 4/4. Functionally, catalyzes the conversion of 4-hydroxy-tetrahydrodipicolinate (HTPA) to tetrahydrodipicolinate. The protein is 4-hydroxy-tetrahydrodipicolinate reductase of Chelativorans sp. (strain BNC1).